The chain runs to 1704 residues: Vitellogenin-1 (1704 aa).

A signal peptide spans 1–14 (MKAVVLALTLAFVA). In terms of domain architecture, Vitellogenin spans 22-660 (FAAGKTYVYK…DAATFMPKSF (639 aa)). N-linked (GlcNAc...) asparagine glycosylation is found at asparagine 446, asparagine 635, asparagine 903, asparagine 908, asparagine 1019, asparagine 1054, asparagine 1080, asparagine 1121, asparagine 1174, asparagine 1285, asparagine 1322, asparagine 1375, asparagine 1379, asparagine 1405, asparagine 1456, and asparagine 1512. Over residues 1078 to 1109 (RRNSSSSSSSSSSSSSESRSSRSSSSSSSSSR) the composition is skewed to low complexity. Residues 1078–1213 (RRNSSSSSSS…SSDRRSKEVM (136 aa)) are disordered. A compositionally biased stretch (low complexity) spans 1122-1204 (SSSSSSSRRS…FSDSSSSSSS (83 aa)). Positions 1442–1617 (AECSFVEDTL…SWILPAESCR (176 aa)) constitute a VWFD domain. 2 disulfides stabilise this stretch: cysteine 1444-cysteine 1580 and cysteine 1467-cysteine 1616.

In terms of processing, phosvitin, an egg yolk storage protein, is one of the most highly phosphorylated (10%) proteins in nature. The N-terminal of the blood vitellogenin is blocked. Produced by the liver, secreted into the blood and then sequestered by receptor mediated endocytosis into growing oocytes, where it is generally cleaved, giving rise to the respective yolk components composed of complex suite of small cleavage products.

Precursor of the major egg-yolk proteins that are sources of nutrients during early development of oviparous organisms. This chain is Vitellogenin-1 (vtg1), found in Fundulus heteroclitus (Killifish).